The chain runs to 132 residues: uncharacterized protein (132 aa).

This is an uncharacterized protein from Escherichia coli.